A 361-amino-acid polypeptide reads, in one-letter code: DNA replication and repair protein RecF (361 aa).

30 to 37 provides a ligand contact to ATP; sequence GPNGSGKT.

It belongs to the RecF family.

The protein resides in the cytoplasm. In terms of biological role, the RecF protein is involved in DNA metabolism; it is required for DNA replication and normal SOS inducibility. RecF binds preferentially to single-stranded, linear DNA. It also seems to bind ATP. The sequence is that of DNA replication and repair protein RecF from Yersinia pestis.